Consider the following 295-residue polypeptide: Protein PHR1-LIKE 2 (295 aa).

The 61-residue stretch at 38 to 98 (TDPKPRLRWT…HLQKFRLGRQ (61 aa)) folds into the HTH myb-type domain. Residues 69 to 94 (PKTIMRTMGVKGLTLYHLKSHLQKFR) constitute a DNA-binding region (H-T-H motif). Positions 96-138 (GRQAGKESTENSKDASCVGESQDTGSSSTSSMRMAQQEQNEGY) are disordered. Basic and acidic residues predominate over residues 99–108 (AGKESTENSK). Positions 127–138 (MRMAQQEQNEGY) are enriched in polar residues. The stretch at 141-161 (TEALRAQMEVQRRLHDQLEVQ) forms a coiled coil. Residues 154-159 (LHDQLE) carry the LHEQLE motif.

Belongs to the MYB-CC family. In terms of assembly, homo- and heterodimers. Interacts with PHL3, but not with PHR1.

Its subcellular location is the nucleus. Transcriptional activator. Acts redundantly with PHR1 as a key component of the central regulatory system controlling transcriptional responses to Pi starvation. Binds in a sequence-specific manner to phosphate starvation-regulated promoters. The polypeptide is Protein PHR1-LIKE 2 (Arabidopsis thaliana (Mouse-ear cress)).